A 553-amino-acid polypeptide reads, in one-letter code: ATP synthase F(1) complex subunit alpha, mitochondrial (553 aa).

Residues 1-43 (MLSVRVAAAVVRALPRRAGLVSRNALGSSFIAARNFHASNTHL) constitute a mitochondrion transit peptide. Phosphoserine is present on residues S53 and S65. The residue at position 76 (S76) is a Phosphoserine; alternate. O-linked (GlcNAc) serine; alternate glycosylation is present at S76. S106 carries the post-translational modification Phosphoserine. An N6-acetyllysine mark is found at K123, K126, and K132. T134 carries the post-translational modification Phosphothreonine. N6-acetyllysine; alternate is present on K161. An N6-succinyllysine; alternate modification is found at K161. Phosphoserine is present on S166. Residue K167 is modified to N6-acetyllysine; alternate. Residue K167 is modified to N6-succinyllysine; alternate. Phosphoserine is present on S184. Position 204 is an omega-N-methylarginine (R204). The ATP site is built by Q215, G217, K218, T219, and S220. T219 is a Mg(2+) binding site. N6-acetyllysine; alternate occurs at positions 230 and 239. 2 positions are modified to N6-succinyllysine; alternate: K230 and K239. The residue at position 240 (K240) is an N6-acetyllysine. N6-acetyllysine; alternate occurs at positions 261 and 305. Residues K261 and K305 each carry the N6-succinyllysine; alternate modification. Position 312 (D312) interacts with Mg(2+). N6-acetyllysine; alternate is present on K427. K427 is modified (N6-succinyllysine; alternate). The residue at position 434 (K434) is an N6-acetyllysine. ATP-binding residues include Q473 and Q475. 4 positions are modified to N6-acetyllysine; alternate: K498, K506, K531, and K539. 4 positions are modified to N6-succinyllysine; alternate: K498, K506, K531, and K539. Position 541 is an N6-acetyllysine (K541).

It belongs to the ATPase alpha/beta chains family. As to quaternary structure, homotrimer. Component of the ATP synthase complex composed at least of ATP5F1A/subunit alpha, ATP5F1B/subunit beta, ATP5MC1/subunit c (homooctomer), MT-ATP6/subunit a, MT-ATP8/subunit 8, ATP5ME/subunit e, ATP5MF/subunit f, ATP5MG/subunit g, ATP5MK/subunit k, ATP5MJ/subunit j, ATP5F1C/subunit gamma, ATP5F1D/subunit delta, ATP5F1E/subunit epsilon, ATP5PF/subunit F6, ATP5PB/subunit b, ATP5PD/subunit d, ATP5PO/subunit OSCP. ATP synthase complex consists of a soluble F(1) head domain (subunits alpha(3) and beta(3)) - the catalytic core - and a membrane F(0) domain - the membrane proton channel (subunits c, a, 8, e, f, g, k and j). These two domains are linked by a central stalk (subunits gamma, delta, and epsilon) rotating inside the F1 region and a stationary peripheral stalk (subunits F6, b, d, and OSCP). Interacts with ATPAF2. Interacts with HRG; the interaction occurs on the surface of T-cells and alters the cell morphology when associated with concanavalin (in vitro). Interacts with PLG (angiostatin peptide); the interaction inhibits most of the angiogenic properties of angiostatin. Interacts with BLOC1S1. Interacts with BCL2L1 isoform BCL-X(L); the interaction mediates the association of BCL2L1 isoform BCL-X(L) with the mitochondrial membrane F(1)F(0) ATP synthase and enhances neurons metabolic efficiency. Interacts with CLN5 and PPT1. Interacts with S100A1; this interaction increases F1-ATPase activity. Interacts with ABCB7; this interaction allows the regulation of cellular iron homeostasis and cellular reactive oxygen species (ROS) levels in cardiomyocytes. In terms of processing, acetylated on lysine residues. BLOC1S1 is required for acetylation.

It localises to the mitochondrion inner membrane. Its subcellular location is the cell membrane. Subunit alpha, of the mitochondrial membrane ATP synthase complex (F(1)F(0) ATP synthase or Complex V) that produces ATP from ADP in the presence of a proton gradient across the membrane which is generated by electron transport complexes of the respiratory chain. ATP synthase complex consist of a soluble F(1) head domain - the catalytic core - and a membrane F(1) domain - the membrane proton channel. These two domains are linked by a central stalk rotating inside the F(1) region and a stationary peripheral stalk. During catalysis, ATP synthesis in the catalytic domain of F(1) is coupled via a rotary mechanism of the central stalk subunits to proton translocation. In vivo, can only synthesize ATP although its ATP hydrolase activity can be activated artificially in vitro. With the catalytic subunit beta (ATP5F1B), forms the catalytic core in the F(1) domain. Subunit alpha does not bear the catalytic high-affinity ATP-binding sites. The chain is ATP synthase F(1) complex subunit alpha, mitochondrial from Pongo abelii (Sumatran orangutan).